The primary structure comprises 383 residues: Dimethylsulfoniopropionate lyase 6 (383 aa).

Belongs to the aspartate/glutamate racemases family. ALMA1 subfamily. Homotetramer.

It catalyses the reaction S,S-dimethyl-beta-propiothetin = acrylate + dimethyl sulfide + H(+). Functionally, mediates cleavage of dimethylsulfoniopropionate (DMSP) into dimethyl sulfide (DMS) and acrylate. DMS is the principal form by which sulfur is transported from oceans to the atmosphere and is a key component of the ocean sulfur cycle. This chain is Dimethylsulfoniopropionate lyase 6, found in Emiliania huxleyi (strain CCMP1516).